Here is a 322-residue protein sequence, read N- to C-terminus: Phosphatidylserine decarboxylase proenzyme (322 aa).

Active-site charge relay system; for autoendoproteolytic cleavage activity residues include Asp90, His147, and Ser254. Ser254 (schiff-base intermediate with substrate; via pyruvic acid; for decarboxylase activity) is an active-site residue. Residue Ser254 is modified to Pyruvic acid (Ser); by autocatalysis. A disordered region spans residues 293–322; the sequence is PDAEPAPLPAEEIEAEHDASPLVDDKKDQV. The segment covering 308–322 has biased composition (basic and acidic residues); sequence EHDASPLVDDKKDQV.

The protein belongs to the phosphatidylserine decarboxylase family. PSD-B subfamily. Prokaryotic type I sub-subfamily. In terms of assembly, heterodimer of a large membrane-associated beta subunit and a small pyruvoyl-containing alpha subunit. Pyruvate is required as a cofactor. In terms of processing, is synthesized initially as an inactive proenzyme. Formation of the active enzyme involves a self-maturation process in which the active site pyruvoyl group is generated from an internal serine residue via an autocatalytic post-translational modification. Two non-identical subunits are generated from the proenzyme in this reaction, and the pyruvate is formed at the N-terminus of the alpha chain, which is derived from the carboxyl end of the proenzyme. The autoendoproteolytic cleavage occurs by a canonical serine protease mechanism, in which the side chain hydroxyl group of the serine supplies its oxygen atom to form the C-terminus of the beta chain, while the remainder of the serine residue undergoes an oxidative deamination to produce ammonia and the pyruvoyl prosthetic group on the alpha chain. During this reaction, the Ser that is part of the protease active site of the proenzyme becomes the pyruvoyl prosthetic group, which constitutes an essential element of the active site of the mature decarboxylase.

The protein resides in the cell membrane. It carries out the reaction a 1,2-diacyl-sn-glycero-3-phospho-L-serine + H(+) = a 1,2-diacyl-sn-glycero-3-phosphoethanolamine + CO2. It functions in the pathway phospholipid metabolism; phosphatidylethanolamine biosynthesis; phosphatidylethanolamine from CDP-diacylglycerol: step 2/2. In terms of biological role, catalyzes the formation of phosphatidylethanolamine (PtdEtn) from phosphatidylserine (PtdSer). The chain is Phosphatidylserine decarboxylase proenzyme from Escherichia coli O45:K1 (strain S88 / ExPEC).